We begin with the raw amino-acid sequence, 182 residues long: Oligoribonuclease (182 aa).

The Exonuclease domain maps to 8–171 (LIWIDLEMTG…DDIRESIKEL (164 aa)). The active site involves Tyr-129.

This sequence belongs to the oligoribonuclease family.

It is found in the cytoplasm. Functionally, 3'-to-5' exoribonuclease specific for small oligoribonucleotides. This chain is Oligoribonuclease, found in Haemophilus influenzae (strain PittGG).